We begin with the raw amino-acid sequence, 459 residues long: Vasoactive intestinal polypeptide receptor 1 (459 aa).

The N-terminal stretch at Met-1–Ala-30 is a signal peptide. The Extracellular portion of the chain corresponds to Ala-31–Ala-142. Disulfide bonds link Cys-37–Cys-209, Cys-50–Cys-72, Cys-63–Cys-105, Cys-86–Cys-122, and Cys-216–Cys-286. N-linked (GlcNAc...) asparagine glycosylation is found at Asn-58, Asn-69, Asn-100, and Asn-104. Residues Val-143–Leu-167 traverse the membrane as a helical segment. Over Phe-168–Arg-175 the chain is Cytoplasmic. Residues Asn-176 to Asp-197 traverse the membrane as a helical segment. At Met-198–Lys-217 the chain is on the extracellular side. The helical transmembrane segment at Ala-218–His-242 threads the bilayer. At Thr-243–Tyr-255 the chain is on the cytoplasmic side. The helical transmembrane segment at Phe-256–Val-277 threads the bilayer. The Extracellular portion of the chain corresponds to Arg-278–Ser-293. A glycan (N-linked (GlcNAc...) asparagine) is linked at Asn-292. The helical transmembrane segment at Ser-294–Ile-318 threads the bilayer. The Cytoplasmic portion of the chain corresponds to Arg-319 to Arg-340. The helical transmembrane segment at Leu-341–Phe-361 threads the bilayer. The Extracellular segment spans residues Phe-362 to Gln-369. The chain crosses the membrane as a helical span at residues Val-370–Leu-393. The Cytoplasmic segment spans residues Asn-394–Val-459.

Belongs to the G-protein coupled receptor 2 family. As to quaternary structure, interacts with ADCYAP1/PACAP; activated by both PACAP27 and PACAP38 neuropeptides. Interacts with VIP; the interaction results in VIPR1 activation.

The protein resides in the cell membrane. Functionally, g protein-coupled receptor activated by the neuropeptides vasoactive intestinal peptide (VIP) and pituitary adenylate cyclase-activating polypeptide (ADCYAP1/PACAP). Binds VIP and both PACAP27 and PACAP38 bioactive peptides with the following order of ligand affinity VIP = PACAP27 &gt; PACAP38. Ligand binding causes a conformation change that triggers signaling via guanine nucleotide-binding proteins (G proteins) and modulates the activity of downstream effectors. Activates cAMP-dependent pathway. The polypeptide is Vasoactive intestinal polypeptide receptor 1 (Mus musculus (Mouse)).